The chain runs to 448 residues: Probable alpha-galactosidase B (448 aa).

An N-terminal signal peptide occupies residues 1-23; it reads MSRFHLPLAAAVVLVSCLWSANA. 2 cysteine pairs are disulfide-bonded: cysteine 46/cysteine 78 and cysteine 128/cysteine 158. Aspartate 156 (nucleophile) is an active-site residue. N-linked (GlcNAc...) asparagine glycans are attached at residues asparagine 163 and asparagine 181. Residue 226-230 participates in substrate binding; it reads EWGQA. An N-linked (GlcNAc...) asparagine glycan is attached at asparagine 237. Aspartate 248 (proton donor) is an active-site residue.

It belongs to the glycosyl hydrolase 27 family.

The protein resides in the secreted. The catalysed reaction is Hydrolysis of terminal, non-reducing alpha-D-galactose residues in alpha-D-galactosides, including galactose oligosaccharides, galactomannans and galactolipids.. Hydrolyzes a variety of simple alpha-D-galactoside as well as more complex molecules such as oligosaccharides and polysaccharides. This chain is Probable alpha-galactosidase B (aglB), found in Aspergillus clavatus (strain ATCC 1007 / CBS 513.65 / DSM 816 / NCTC 3887 / NRRL 1 / QM 1276 / 107).